Here is a 1011-residue protein sequence, read N- to C-terminus: Probable calcium-transporting ATPase (1011 aa).

At 1 to 65 the chain is on the cytoplasmic side; it reads MLPENLPTDP…WKLVLAQFED (65 aa). Residues 66–84 traverse the membrane as a helical segment; it reads TLVRILLLAATVSFAMAVV. Over 85-90 the chain is Extracellular; the sequence is ENNAAD. Residues 91–110 traverse the membrane as a helical segment; it reads FVEPFIILLILILNATVGVW. Residues 111–258 are Cytoplasmic-facing; it reads QENRAEGAIE…QVKLDEFGVL (148 aa). A helical transmembrane segment spans residues 259-278; that stretch reads LSKVIGYICLVVFAVNLVRW. Residues 279 to 303 lie on the Extracellular side of the membrane; the sequence is YATHKPTKNETFFTRYIQPSVHCLK. Residues 304–321 traverse the membrane as a helical segment; that stretch reads VAVALAVAAIPEGLPAVV. Residues 322–770 are Cytoplasmic-facing; sequence TTCLALGTRR…RYLISSNIGE (449 aa). The active-site 4-aspartylphosphate intermediate is the Asp357. Lys514 contacts ATP. The chain crosses the membrane as a helical span at residues 771-794; it reads VVCILVTGLFGLPEALSPVQLLWV. Residues 795-835 are Extracellular-facing; it reads NLVTDGLPATALGFNAPDRDIMEQRPRRMEEPIVNGWLFMR. A helical membrane pass occupies residues 836–856; that stretch reads YMVIGVYVGLATVGGFLWWFL. The Cytoplasmic segment spans residues 857 to 885; it reads RHGFSWHDLTTYTACSDMTNGTCLLLANP. The helical transmembrane segment at 886 to 905 threads the bilayer; the sequence is QTARAIALSILVVVEMLNAL. Residues 906–922 lie on the Extracellular side of the membrane; that stretch reads NALSENASLIVSRPSSN. Residues 923–942 traverse the membrane as a helical segment; the sequence is VWLLFAIFSSLSLHLIIMYV. At 943–1011 the chain is on the cytoplasmic side; it reads PFFAKLFNIV…MEKAQEKKKD (69 aa).

Belongs to the cation transport ATPase (P-type) (TC 3.A.3) family.

The protein resides in the flagellar pocket. It is found in the cell membrane. The enzyme catalyses Ca(2+)(in) + ATP + H2O = Ca(2+)(out) + ADP + phosphate + H(+). In terms of biological role, this magnesium-dependent enzyme catalyzes the hydrolysis of ATP coupled with the transport of the calcium. The polypeptide is Probable calcium-transporting ATPase (TBA1) (Trypanosoma brucei brucei).